Consider the following 190-residue polypeptide: Molybdenum cofactor guanylyltransferase (190 aa).

GTP-binding positions include 8–10 (LAG), lysine 20, aspartate 64, and aspartate 98. Mg(2+) is bound at residue aspartate 98.

This sequence belongs to the MobA family. In terms of assembly, monomer. Requires Mg(2+) as cofactor.

It is found in the cytoplasm. The catalysed reaction is Mo-molybdopterin + GTP + H(+) = Mo-molybdopterin guanine dinucleotide + diphosphate. Its function is as follows. Transfers a GMP moiety from GTP to Mo-molybdopterin (Mo-MPT) cofactor (Moco or molybdenum cofactor) to form Mo-molybdopterin guanine dinucleotide (Mo-MGD) cofactor. This chain is Molybdenum cofactor guanylyltransferase, found in Rhodobacter capsulatus (Rhodopseudomonas capsulata).